A 235-amino-acid chain; its full sequence is Aspartate/glutamate leucyltransferase (235 aa).

The protein belongs to the R-transferase family. Bpt subfamily.

Its subcellular location is the cytoplasm. It catalyses the reaction N-terminal L-glutamyl-[protein] + L-leucyl-tRNA(Leu) = N-terminal L-leucyl-L-glutamyl-[protein] + tRNA(Leu) + H(+). It carries out the reaction N-terminal L-aspartyl-[protein] + L-leucyl-tRNA(Leu) = N-terminal L-leucyl-L-aspartyl-[protein] + tRNA(Leu) + H(+). Functions in the N-end rule pathway of protein degradation where it conjugates Leu from its aminoacyl-tRNA to the N-termini of proteins containing an N-terminal aspartate or glutamate. This chain is Aspartate/glutamate leucyltransferase, found in Pseudomonas putida (strain W619).